Consider the following 308-residue polypeptide: Hydroxyacylglutathione hydrolase, mitochondrial (308 aa).

A mitochondrion-targeting transit peptide spans 1-13 (MVLGRGLLGRRSL). Residues His102, His104, Asp106, and His107 each coordinate Zn(2+). Lys116 is subject to N6-acetyllysine. Positions 158 and 182 each coordinate Zn(2+). Residues 191-193 (KFY) and 221-223 (HEY) contribute to the substrate site. Residue His221 coordinates Zn(2+). Lys229 is modified (N6-acetyllysine; alternate). Lys229 bears the N6-succinyllysine; alternate mark. 297–300 (RKEK) contacts substrate.

The protein belongs to the metallo-beta-lactamase superfamily. Glyoxalase II family. Monomer. The cofactor is Zn(2+). Testis.

The protein resides in the mitochondrion matrix. It is found in the cytoplasm. The enzyme catalyses an S-(2-hydroxyacyl)glutathione + H2O = a 2-hydroxy carboxylate + glutathione + H(+). It carries out the reaction (R)-S-lactoylglutathione + H2O = (R)-lactate + glutathione + H(+). The protein operates within secondary metabolite metabolism; methylglyoxal degradation; (R)-lactate from methylglyoxal: step 2/2. Functionally, thiolesterase that catalyzes the hydrolysis of S-D-lactoyl-glutathione to form glutathione and D-lactic acid. This Macaca fascicularis (Crab-eating macaque) protein is Hydroxyacylglutathione hydrolase, mitochondrial (HAGH).